A 41-amino-acid polypeptide reads, in one-letter code: Large ribosomal subunit protein bL36B (41 aa).

The protein belongs to the bacterial ribosomal protein bL36 family.

The chain is Large ribosomal subunit protein bL36B from Neisseria meningitidis serogroup B (strain ATCC BAA-335 / MC58).